The chain runs to 83 residues: Large ribosomal subunit protein eL14 (83 aa).

It belongs to the eukaryotic ribosomal protein eL14 family.

In Thermococcus gammatolerans (strain DSM 15229 / JCM 11827 / EJ3), this protein is Large ribosomal subunit protein eL14.